Here is a 611-residue protein sequence, read N- to C-terminus: Muscarinic acetylcholine receptor gar-3 (611 aa).

Residues 1 to 67 lie on the Extracellular side of the membrane; the sequence is MQSSSLGNAD…LLGEEGRMVM (67 aa). N-linked (GlcNAc...) asparagine glycans are attached at residues Asn28 and Asn33. The helical transmembrane segment at 68–88 threads the bilayer; the sequence is IVVIGAMFALVTSLGNLMVMV. Over 89-101 the chain is Cytoplasmic; that stretch reads SFKIDKQLQTISN. Residues 102–122 traverse the membrane as a helical segment; it reads YFLFSLAVADIAIGVISIPMF. The Extracellular segment spans residues 123–140; it reads TYYTAIQKWDLGYTMCQF. An intrachain disulfide couples Cys138 to Cys218. A helical membrane pass occupies residues 141-161; sequence WLCIDYLMSNASVLNLLLISF. Over 162–181 the chain is Cytoplasmic; it reads DRYFSVTRPLSYRPRRTTKK. Residues 182–202 traverse the membrane as a helical segment; sequence ALTMIACTYIISLILWPPWII. At 203–227 the chain is on the extracellular side; the sequence is SWPYIEGKFTAEPGTCVVQFLQTNP. Residues 228 to 248 form a helical membrane-spanning segment; the sequence is YVTVGTAVAAFYLPVTIMCIL. The Cytoplasmic segment spans residues 249 to 525; sequence YTRVYWETQK…RKQESKAAKT (277 aa). Disordered regions lie at residues 299-364, 377-432, 446-477, and 500-519; these read RRSM…SSEA, SHFA…NNNS, SRPSVRLSSCEPYLDEPISTRNRSKSDCNSEI, and FSSQERKSEKEQRKNERKQE. The segment covering 307–317 has biased composition (low complexity); it reads SSTSIIKSSGS. A compositionally biased stretch (basic and acidic residues) spans 503-519; sequence QERKSEKEQRKNERKQE. The chain crosses the membrane as a helical span at residues 526 to 546; it reads LSAILCAFIATWTPYNLIVCW. Residues 547 to 557 lie on the Extracellular side of the membrane; that stretch reads EAFFPNTVPNV. The chain crosses the membrane as a helical span at residues 558–578; sequence LWTFSYFLCYINSTINPLCYA. Over 579-611 the chain is Cytoplasmic; the sequence is LCNARFRHTYMRILRCKFKAERPTMNQGYVRRN.

It belongs to the G-protein coupled receptor 1 family. Muscarinic acetylcholine receptor subfamily.

The protein resides in the cell membrane. The muscarinic acetylcholine receptor mediates various cellular responses, including inhibition of adenylate cyclase, breakdown of phosphoinositides and modulation of potassium channels through the action of G proteins. Primary transducing effect is Pi turnover. Enhances the release of the neurotransmitter acetlycholine in cholinergic motor neurons, which in turn positively feeds back to depolarize body wall muscles and allows for the maintenance of normal body posture and locomotion. In Caenorhabditis elegans, this protein is Muscarinic acetylcholine receptor gar-3 (gar-3).